Here is a 735-residue protein sequence, read N- to C-terminus: F-box and leucine-rich repeat protein 13 (735 aa).

An F-box domain is found at 152–198 (KCDISLLPERAILQIFFYLSLKDVIICGQVNHAWMLMTQLNSLWNAI). LRR repeat units lie at residues 230-254 (GCLL…NVSD), 255-280 (CPTF…NLSN), 281-305 (TTIT…SLAY), 306-333 (CRRF…DLSG), 334-359 (CTQI…TIND), 360-385 (MPTL…VFTG), 386-406 (APHI…RKIR), 410-435 (NKRV…YMAD), 436-460 (CKGI…NLAN), 461-488 (CVRI…NLSN), 489-514 (CVRL…SLRN), 515-538 (CEHL…IDLS), 539-563 (GTDI…SVSE), 564-589 (CYRI…DVSY), 590-615 (CSQL…SIAG), 616-641 (CPKI…DISG), and 642-667 (CVLL…KMQY). Residues 682 to 692 (KVQQQEYNTND) show a composition bias toward polar residues. The interval 682–703 (KVQQQEYNTNDPPRWFGYDREG) is disordered.

Belongs to the DRC6 family. In terms of assembly, component of the nexin-dynein regulatory complex (N-DRC). Directly interacts with SKP1 and CUL1. Interacts with TCTE1/DRC5.

It is found in the cytoplasm. It localises to the cytoskeleton. The protein localises to the flagellum axoneme. Its subcellular location is the microtubule organizing center. The protein resides in the centrosome. Functionally, substrate-recognition component of the SCF (SKP1-CUL1-F-box protein)-type E3 ubiquitin ligase complex. Component of the nexin-dynein regulatory complex (N-DRC), a key regulator of ciliary/flagellar motility which maintains the alignment and integrity of the distal axoneme and regulates microtubule sliding in motile axonemes. Specifically targets CEP192 isoform 3 for ubiquitin-mediated proteolysis and thereby acts as a regulator of microtubule nucleation activity. This is F-box and leucine-rich repeat protein 13 (FBXL13) from Homo sapiens (Human).